A 441-amino-acid chain; its full sequence is Proline--tRNA ligase (441 aa).

This sequence belongs to the class-II aminoacyl-tRNA synthetase family. ProS type 2 subfamily. As to quaternary structure, homodimer.

The protein resides in the cytoplasm. It carries out the reaction tRNA(Pro) + L-proline + ATP = L-prolyl-tRNA(Pro) + AMP + diphosphate. Its function is as follows. Catalyzes the attachment of proline to tRNA(Pro) in a two-step reaction: proline is first activated by ATP to form Pro-AMP and then transferred to the acceptor end of tRNA(Pro). The chain is Proline--tRNA ligase from Methylobacterium radiotolerans (strain ATCC 27329 / DSM 1819 / JCM 2831 / NBRC 15690 / NCIMB 10815 / 0-1).